Reading from the N-terminus, the 254-residue chain is PHD finger protein ALFIN-LIKE 8 (254 aa).

The segment at 137–194 is disordered; that stretch reads GTAKKQSKEKTPKTSGKSNKSGTKPSRQPEPNSRGPKMPPPKDEDDSGGEEEEEEEDH. Over residues 149–162 the composition is skewed to low complexity; the sequence is KTSGKSNKSGTKPS. Positions 179-194 are enriched in acidic residues; sequence DEDDSGGEEEEEEEDH. The PHD-type zinc-finger motif lies at 196 to 248; sequence NTLCGACGDNYGQDEFWICCDACETWFHGKCVKITPAKAEHIKHYKCPNCSSS.

It belongs to the Alfin family. In terms of assembly, interacts with H3K4me3 and to a lesser extent with H3K4me2.

The protein resides in the nucleus. In terms of biological role, histone-binding component that specifically recognizes H3 tails trimethylated on 'Lys-4' (H3K4me3), which mark transcription start sites of virtually all active genes. This is PHD finger protein ALFIN-LIKE 8 from Oryza sativa subsp. japonica (Rice).